The following is a 126-amino-acid chain: Glycine cleavage system H protein (126 aa).

In terms of domain architecture, Lipoyl-binding spans 21-103 (TVTVGISDHA…YESGWIARIK (83 aa)). Residue Lys-62 is modified to N6-lipoyllysine.

This sequence belongs to the GcvH family. The glycine cleavage system is composed of four proteins: P, T, L and H. Requires (R)-lipoate as cofactor.

Its function is as follows. The glycine cleavage system catalyzes the degradation of glycine. The H protein shuttles the methylamine group of glycine from the P protein to the T protein. The sequence is that of Glycine cleavage system H protein from Aliivibrio fischeri (strain MJ11) (Vibrio fischeri).